A 438-amino-acid polypeptide reads, in one-letter code: Serine hydroxymethyltransferase (438 aa).

(6S)-5,6,7,8-tetrahydrofolate is bound by residues Leu133 and 137–139 (GHL). Lys242 is subject to N6-(pyridoxal phosphate)lysine.

Belongs to the SHMT family. As to quaternary structure, homodimer. Requires pyridoxal 5'-phosphate as cofactor.

The protein resides in the cytoplasm. The enzyme catalyses (6R)-5,10-methylene-5,6,7,8-tetrahydrofolate + glycine + H2O = (6S)-5,6,7,8-tetrahydrofolate + L-serine. Its pathway is one-carbon metabolism; tetrahydrofolate interconversion. It functions in the pathway amino-acid biosynthesis; glycine biosynthesis; glycine from L-serine: step 1/1. In terms of biological role, catalyzes the reversible interconversion of serine and glycine with tetrahydrofolate (THF) serving as the one-carbon carrier. This reaction serves as the major source of one-carbon groups required for the biosynthesis of purines, thymidylate, methionine, and other important biomolecules. Also exhibits THF-independent aldolase activity toward beta-hydroxyamino acids, producing glycine and aldehydes, via a retro-aldol mechanism. The chain is Serine hydroxymethyltransferase from Brucella ovis (strain ATCC 25840 / 63/290 / NCTC 10512).